The primary structure comprises 126 residues: Fluoride-specific ion channel FluC (126 aa).

A run of 4 helical transmembrane segments spans residues 4–24 (PLLS…FLGL), 33–53 (IPLG…FAMA), 67–87 (FVIT…IEIV), and 97–117 (MAML…CLGL). Gly74 and Thr77 together coordinate Na(+).

The protein belongs to the fluoride channel Fluc/FEX (TC 1.A.43) family.

The protein localises to the cell inner membrane. It carries out the reaction fluoride(in) = fluoride(out). Na(+) is not transported, but it plays an essential structural role and its presence is essential for fluoride channel function. Its function is as follows. Fluoride-specific ion channel. Important for reducing fluoride concentration in the cell, thus reducing its toxicity. In Acinetobacter baumannii (strain SDF), this protein is Fluoride-specific ion channel FluC.